Consider the following 800-residue polypeptide: Phenylalanine--tRNA ligase beta subunit (800 aa).

Residues Phe39–Val147 enclose the tRNA-binding domain. A B5 domain is found at Trp401–Pro477. Residues Asp455, Asp461, Glu464, and Glu465 each contribute to the Mg(2+) site. An FDX-ACB domain is found at Pro706–Ile800.

The protein belongs to the phenylalanyl-tRNA synthetase beta subunit family. Type 1 subfamily. In terms of assembly, tetramer of two alpha and two beta subunits. The cofactor is Mg(2+).

Its subcellular location is the cytoplasm. The catalysed reaction is tRNA(Phe) + L-phenylalanine + ATP = L-phenylalanyl-tRNA(Phe) + AMP + diphosphate + H(+). The sequence is that of Phenylalanine--tRNA ligase beta subunit from Oleidesulfovibrio alaskensis (strain ATCC BAA-1058 / DSM 17464 / G20) (Desulfovibrio alaskensis).